A 159-amino-acid chain; its full sequence is Crossover junction endodeoxyribonuclease RuvC (159 aa).

Residues Asp7, Glu67, and Asp139 contribute to the active site. Mg(2+) is bound by residues Asp7, Glu67, and Asp139.

This sequence belongs to the RuvC family. As to quaternary structure, homodimer which binds Holliday junction (HJ) DNA. The HJ becomes 2-fold symmetrical on binding to RuvC with unstacked arms; it has a different conformation from HJ DNA in complex with RuvA. In the full resolvosome a probable DNA-RuvA(4)-RuvB(12)-RuvC(2) complex forms which resolves the HJ. Mg(2+) serves as cofactor.

The protein resides in the cytoplasm. It catalyses the reaction Endonucleolytic cleavage at a junction such as a reciprocal single-stranded crossover between two homologous DNA duplexes (Holliday junction).. In terms of biological role, the RuvA-RuvB-RuvC complex processes Holliday junction (HJ) DNA during genetic recombination and DNA repair. Endonuclease that resolves HJ intermediates. Cleaves cruciform DNA by making single-stranded nicks across the HJ at symmetrical positions within the homologous arms, yielding a 5'-phosphate and a 3'-hydroxyl group; requires a central core of homology in the junction. The consensus cleavage sequence is 5'-(A/T)TT(C/G)-3'. Cleavage occurs on the 3'-side of the TT dinucleotide at the point of strand exchange. HJ branch migration catalyzed by RuvA-RuvB allows RuvC to scan DNA until it finds its consensus sequence, where it cleaves and resolves the cruciform DNA. This is Crossover junction endodeoxyribonuclease RuvC from Orientia tsutsugamushi (strain Ikeda) (Rickettsia tsutsugamushi).